Here is a 449-residue protein sequence, read N- to C-terminus: Trigger factor (449 aa).

The 86-residue stretch at 162-247 (GDTVTIDYTG…IHEVKSKELP (86 aa)) folds into the PPIase FKBP-type domain. Positions 427–438 (AKKATKKSTAKK) are enriched in basic residues. Residues 427–449 (AKKATKKSTAKKSTKEDEKKADK) form a disordered region. Over residues 439–449 (STKEDEKKADK) the composition is skewed to basic and acidic residues.

The protein belongs to the FKBP-type PPIase family. Tig subfamily.

Its subcellular location is the cytoplasm. The enzyme catalyses [protein]-peptidylproline (omega=180) = [protein]-peptidylproline (omega=0). Involved in protein export. Acts as a chaperone by maintaining the newly synthesized protein in an open conformation. Functions as a peptidyl-prolyl cis-trans isomerase. The chain is Trigger factor from Lactobacillus gasseri (strain ATCC 33323 / DSM 20243 / BCRC 14619 / CIP 102991 / JCM 1131 / KCTC 3163 / NCIMB 11718 / NCTC 13722 / AM63).